The sequence spans 90 residues: Probable Fe(2+)-trafficking protein (90 aa).

This sequence belongs to the Fe(2+)-trafficking protein family.

Its function is as follows. Could be a mediator in iron transactions between iron acquisition and iron-requiring processes, such as synthesis and/or repair of Fe-S clusters in biosynthetic enzymes. In Actinobacillus succinogenes (strain ATCC 55618 / DSM 22257 / CCUG 43843 / 130Z), this protein is Probable Fe(2+)-trafficking protein.